A 227-amino-acid chain; its full sequence is 7-cyano-7-deazaguanine synthase (227 aa).

Leu-8 to Leu-18 is a binding site for ATP. Zn(2+)-binding residues include Cys-191, Cys-201, Cys-204, and Cys-207.

The protein belongs to the QueC family. Zn(2+) is required as a cofactor.

It catalyses the reaction 7-carboxy-7-deazaguanine + NH4(+) + ATP = 7-cyano-7-deazaguanine + ADP + phosphate + H2O + H(+). It participates in purine metabolism; 7-cyano-7-deazaguanine biosynthesis. Its function is as follows. Catalyzes the ATP-dependent conversion of 7-carboxy-7-deazaguanine (CDG) to 7-cyano-7-deazaguanine (preQ(0)). The chain is 7-cyano-7-deazaguanine synthase from Paramagnetospirillum magneticum (strain ATCC 700264 / AMB-1) (Magnetospirillum magneticum).